Consider the following 419-residue polypeptide: D-amino acid dehydrogenase (419 aa).

Residue 3–17 coordinates FAD; the sequence is VIVLGSGVIGVASAY.

This sequence belongs to the DadA oxidoreductase family. FAD serves as cofactor.

It carries out the reaction a D-alpha-amino acid + A + H2O = a 2-oxocarboxylate + AH2 + NH4(+). The protein operates within amino-acid degradation; D-alanine degradation; NH(3) and pyruvate from D-alanine: step 1/1. Oxidative deamination of D-amino acids. The chain is D-amino acid dehydrogenase from Acinetobacter baylyi (strain ATCC 33305 / BD413 / ADP1).